The chain runs to 469 residues: Cytoplasmic tRNA 2-thiolation protein 2 (469 aa).

The protein belongs to the CTU2/NCS2 family.

Its subcellular location is the cytoplasm. Its pathway is tRNA modification; 5-methoxycarbonylmethyl-2-thiouridine-tRNA biosynthesis. In terms of biological role, plays a central role in 2-thiolation of mcm(5)S(2)U at tRNA wobble positions of tRNA(Lys), tRNA(Glu) and tRNA(Gln). May act by forming a heterodimer with NCS6 that ligates sulfur from thiocarboxylated URM1 onto the uridine of tRNAs at wobble position. Prior mcm(5) tRNA modification by the elongator complex is required for 2-thiolation. May also be involved in protein urmylation. The protein is Cytoplasmic tRNA 2-thiolation protein 2 of Candida glabrata (strain ATCC 2001 / BCRC 20586 / JCM 3761 / NBRC 0622 / NRRL Y-65 / CBS 138) (Yeast).